Here is a 126-residue protein sequence, read N- to C-terminus: Large ribosomal subunit protein bL17 (126 aa).

The protein belongs to the bacterial ribosomal protein bL17 family. In terms of assembly, part of the 50S ribosomal subunit. Contacts protein L32.

The polypeptide is Large ribosomal subunit protein bL17 (Xylella fastidiosa (strain 9a5c)).